The chain runs to 380 residues: D-threo-3-hydroxyaspartate dehydratase (380 aa).

An N6-(pyridoxal phosphate)lysine modification is found at K43.

The protein belongs to the DSD1 family. As to quaternary structure, monomer. Pyridoxal 5'-phosphate is required as a cofactor. It depends on Mn(2+) as a cofactor. Co(2+) serves as cofactor. The cofactor is Ni(2+).

It catalyses the reaction (3R)-3-hydroxy-D-aspartate = oxaloacetate + NH4(+). With respect to regulation, strongly inhibited by hydroxylamine. Modestly inhibited by EDTA. Functionally, catalyzes the deamination of D-threo-3-hydroxyaspartate (D-THA). Also exhibits dehydratase activity towards L-threo-3-hydroxyaspartate (L-THA), L-erythro-3-hydroxyaspartate (L-EHA) and D-serine. The protein is D-threo-3-hydroxyaspartate dehydratase (dthadh) of Delftia sp. (strain HT23).